Reading from the N-terminus, the 333-residue chain is MANIYYDDSCDLNLLKGKTIAVIGYGSQGHAQAQNMKDSGLKVIIGLRDGSKSVKEAKEAGFEVYNVAEASKKADIIQILAPDTIQADMYKADIEPNLSEGKALVFSHGFNIHYDLITPPKNVDVYMVAPKGPGHLVRRVYTEGGGVPCLIAIYQDATGQAKARALAHASGVGGGRAGILETSFREETETDLFGEQAVLCGGVANLIMSGFETLTEAGYDPEIAYFECLHEVKLITDLIYEGGLARMRFSISDTAEYGDYISGPRVIDAGVKARMKDVLTDIQKDKGAAFAKRWMADTKAGYPEYKKLKEKNAAHPIEAVGTKLRSMMKWLAK.

In terms of domain architecture, KARI N-terminal Rossmann spans 2 to 182 (ANIYYDDSCD…GGGRAGILET (181 aa)). NADP(+)-binding positions include 25–28 (YGSQ), R48, S51, S53, and 83–86 (DTIQ). The active site involves H108. G134 lines the NADP(+) pocket. Positions 183 to 331 (SFREETETDL…TKLRSMMKWL (149 aa)) constitute a KARI C-terminal knotted domain. Residues D191, E195, E227, and E231 each coordinate Mg(2+). S252 lines the substrate pocket.

This sequence belongs to the ketol-acid reductoisomerase family. Mg(2+) serves as cofactor.

The catalysed reaction is (2R)-2,3-dihydroxy-3-methylbutanoate + NADP(+) = (2S)-2-acetolactate + NADPH + H(+). It carries out the reaction (2R,3R)-2,3-dihydroxy-3-methylpentanoate + NADP(+) = (S)-2-ethyl-2-hydroxy-3-oxobutanoate + NADPH + H(+). It functions in the pathway amino-acid biosynthesis; L-isoleucine biosynthesis; L-isoleucine from 2-oxobutanoate: step 2/4. It participates in amino-acid biosynthesis; L-valine biosynthesis; L-valine from pyruvate: step 2/4. In terms of biological role, involved in the biosynthesis of branched-chain amino acids (BCAA). Catalyzes an alkyl-migration followed by a ketol-acid reduction of (S)-2-acetolactate (S2AL) to yield (R)-2,3-dihydroxy-isovalerate. In the isomerase reaction, S2AL is rearranged via a Mg-dependent methyl migration to produce 3-hydroxy-3-methyl-2-ketobutyrate (HMKB). In the reductase reaction, this 2-ketoacid undergoes a metal-dependent reduction by NADPH to yield (R)-2,3-dihydroxy-isovalerate. This Leptospira biflexa serovar Patoc (strain Patoc 1 / Ames) protein is Ketol-acid reductoisomerase (NADP(+)).